A 379-amino-acid chain; its full sequence is 1-deoxy-D-xylulose 5-phosphate reductoisomerase (379 aa).

NADPH-binding residues include Thr-10, Gly-11, Ser-12, Ile-13, Asn-39, and Asn-121. 1-deoxy-D-xylulose 5-phosphate is bound at residue Lys-122. Position 123 (Glu-123) interacts with NADPH. Asp-147 provides a ligand contact to Mn(2+). The 1-deoxy-D-xylulose 5-phosphate site is built by Ser-148, Glu-149, Ser-173, and His-196. Glu-149 is a Mn(2+) binding site. Position 202 (Gly-202) interacts with NADPH. 1-deoxy-D-xylulose 5-phosphate is bound by residues Ser-209, Asn-214, Lys-215, and Glu-218. Mn(2+) is bound at residue Glu-218.

The protein belongs to the DXR family. It depends on Mg(2+) as a cofactor. The cofactor is Mn(2+).

It catalyses the reaction 2-C-methyl-D-erythritol 4-phosphate + NADP(+) = 1-deoxy-D-xylulose 5-phosphate + NADPH + H(+). It functions in the pathway isoprenoid biosynthesis; isopentenyl diphosphate biosynthesis via DXP pathway; isopentenyl diphosphate from 1-deoxy-D-xylulose 5-phosphate: step 1/6. In terms of biological role, catalyzes the NADPH-dependent rearrangement and reduction of 1-deoxy-D-xylulose-5-phosphate (DXP) to 2-C-methyl-D-erythritol 4-phosphate (MEP). The chain is 1-deoxy-D-xylulose 5-phosphate reductoisomerase from Chlamydia felis (strain Fe/C-56) (Chlamydophila felis).